We begin with the raw amino-acid sequence, 434 residues long: Nicotinate phosphoribosyltransferase (434 aa).

The residue at position 242 (H242) is a Phosphohistidine; by autocatalysis.

It belongs to the NAPRTase family. Post-translationally, transiently phosphorylated on a His residue during the reaction cycle. Phosphorylation strongly increases the affinity for substrates and increases the rate of nicotinate D-ribonucleotide production. Dephosphorylation regenerates the low-affinity form of the enzyme, leading to product release.

It catalyses the reaction nicotinate + 5-phospho-alpha-D-ribose 1-diphosphate + ATP + H2O = nicotinate beta-D-ribonucleotide + ADP + phosphate + diphosphate. It functions in the pathway cofactor biosynthesis; NAD(+) biosynthesis; nicotinate D-ribonucleotide from nicotinate: step 1/1. In terms of biological role, catalyzes the synthesis of beta-nicotinate D-ribonucleotide from nicotinate and 5-phospho-D-ribose 1-phosphate at the expense of ATP. In Rhizobium leguminosarum bv. trifolii (strain WSM2304), this protein is Nicotinate phosphoribosyltransferase.